Here is a 346-residue protein sequence, read N- to C-terminus: Dihydroorotate dehydrogenase (quinone) (346 aa).

FMN is bound by residues 61–65 and Thr-85; that span reads AGLDK. Residue Lys-65 coordinates substrate. 110 to 114 contacts substrate; it reads NRMGF. Residues Asn-138 and Asn-171 each coordinate FMN. A substrate-binding site is contributed by Asn-171. Ser-174 acts as the Nucleophile in catalysis. Asn-176 is a substrate binding site. The FMN site is built by Lys-216 and Thr-244. Substrate is bound at residue 245 to 246; it reads NT. FMN is bound by residues Gly-267, Gly-296, and 317-318; that span reads YS.

The protein belongs to the dihydroorotate dehydrogenase family. Type 2 subfamily. In terms of assembly, monomer. FMN is required as a cofactor.

The protein localises to the cell membrane. The enzyme catalyses (S)-dihydroorotate + a quinone = orotate + a quinol. Its pathway is pyrimidine metabolism; UMP biosynthesis via de novo pathway; orotate from (S)-dihydroorotate (quinone route): step 1/1. Catalyzes the conversion of dihydroorotate to orotate with quinone as electron acceptor. This chain is Dihydroorotate dehydrogenase (quinone), found in Marinomonas sp. (strain MWYL1).